The following is a 384-amino-acid chain: Succinyl-diaminopimelate desuccinylase (384 aa).

Zn(2+) is bound at residue histidine 69. Aspartate 71 is a catalytic residue. Aspartate 103 is a Zn(2+) binding site. Glutamate 137 functions as the Proton acceptor in the catalytic mechanism. The Zn(2+) site is built by glutamate 138, glutamate 166, and histidine 355.

It belongs to the peptidase M20A family. DapE subfamily. As to quaternary structure, homodimer. Zn(2+) is required as a cofactor. It depends on Co(2+) as a cofactor.

It carries out the reaction N-succinyl-(2S,6S)-2,6-diaminopimelate + H2O = (2S,6S)-2,6-diaminopimelate + succinate. It participates in amino-acid biosynthesis; L-lysine biosynthesis via DAP pathway; LL-2,6-diaminopimelate from (S)-tetrahydrodipicolinate (succinylase route): step 3/3. Its function is as follows. Catalyzes the hydrolysis of N-succinyl-L,L-diaminopimelic acid (SDAP), forming succinate and LL-2,6-diaminopimelate (DAP), an intermediate involved in the bacterial biosynthesis of lysine and meso-diaminopimelic acid, an essential component of bacterial cell walls. In Rickettsia canadensis (strain McKiel), this protein is Succinyl-diaminopimelate desuccinylase.